The following is a 68-amino-acid chain: Putative transcript Y 10 protein (68 aa).

The chain is Putative transcript Y 10 protein (TTTY10) from Homo sapiens (Human).